The sequence spans 262 residues: DNA-directed RNA polymerase subunit Rpo3 (262 aa).

Belongs to the archaeal Rpo3/eukaryotic RPB3 RNA polymerase subunit family. As to quaternary structure, part of the RNA polymerase complex.

The protein resides in the cytoplasm. The catalysed reaction is RNA(n) + a ribonucleoside 5'-triphosphate = RNA(n+1) + diphosphate. Functionally, DNA-dependent RNA polymerase (RNAP) catalyzes the transcription of DNA into RNA using the four ribonucleoside triphosphates as substrates. The polypeptide is DNA-directed RNA polymerase subunit Rpo3 (Pyrobaculum neutrophilum (strain DSM 2338 / JCM 9278 / NBRC 100436 / V24Sta) (Thermoproteus neutrophilus)).